The chain runs to 316 residues: tRNA dimethylallyltransferase (316 aa).

Residue 17-24 coordinates ATP; it reads GPTASGKT. 19–24 contributes to the substrate binding site; the sequence is TASGKT. 4 interaction with substrate tRNA regions span residues 42-45, 166-170, 247-252, and 280-287; these read DSAL, QRLSR, RCVGYR, and KRQITWLR.

It belongs to the IPP transferase family. Monomer. Mg(2+) is required as a cofactor.

The enzyme catalyses adenosine(37) in tRNA + dimethylallyl diphosphate = N(6)-dimethylallyladenosine(37) in tRNA + diphosphate. Catalyzes the transfer of a dimethylallyl group onto the adenine at position 37 in tRNAs that read codons beginning with uridine, leading to the formation of N6-(dimethylallyl)adenosine (i(6)A). In Enterobacter sp. (strain 638), this protein is tRNA dimethylallyltransferase.